Reading from the N-terminus, the 549-residue chain is Fas-activated serine/threonine kinase (549 aa).

The tract at residues 1 to 30 is disordered; the sequence is MRRPRGEPGPRAPRPTEGATCAGPGESWSP. An RAP domain is found at 477–535; that stretch reads VVLVLRERWHFCRDGRVLLGSRALRERHLGLMGYQLLPLPFEELESQRGLPQLKSYLRQ.

Belongs to the FAST protein kinase family. Interacts with TIA1; the interactions leads to TIA1 phosphorylation. Interacts with TIAR. In terms of processing, autophosphorylated on serine/threonine residues. Activated by dephosphorylation. As to expression, expressed in heart, brain, placenta, lung, liver, skeletal muscle, kidney and pancreas.

The protein localises to the mitochondrion matrix. The enzyme catalyses L-seryl-[Fas-activated protein] + ATP = O-phospho-L-seryl-[Fas-activated protein] + ADP + H(+). It catalyses the reaction L-threonyl-[Fas-activated protein] + ATP = O-phospho-L-threonyl-[Fas-activated protein] + ADP + H(+). It carries out the reaction L-seryl-[protein] + ATP = O-phospho-L-seryl-[protein] + ADP + H(+). The catalysed reaction is L-threonyl-[protein] + ATP = O-phospho-L-threonyl-[protein] + ADP + H(+). Functionally, phosphorylates the splicing regulator TIA1, thereby promoting the inclusion of FAS exon 6, which leads to an mRNA encoding a pro-apoptotic form of the receptor. Required for the biogenesis of some mitochondrial-encoded mRNAs, specifically stabilizes ND6 (NADH dehydrogenase complex subunit 6) mRNA, and regulates its levels. The polypeptide is Fas-activated serine/threonine kinase (FASTK) (Homo sapiens (Human)).